The chain runs to 373 residues: Glutamine synthetase (373 aa).

The 83-residue stretch at 24–106 (EKVQAMYIWI…VLCEVFKYNR (83 aa)) folds into the GS beta-grasp domain. Positions 113–373 (LRHTCRRIMD…TGDEPFEYKN (261 aa)) constitute a GS catalytic domain. Residue Glu-134 coordinates ATP. Mn(2+)-binding residues include Glu-134, Glu-136, Glu-196, and Glu-203. 203 to 208 (EFQVGP) serves as a coordination point for ATP. 246–247 (NW) contacts L-glutamate. His-253 is a Mn(2+) binding site. ATP is bound by residues 255–257 (NFS), Arg-319, and Arg-324. Arg-319 is an L-glutamate binding site. 336 to 338 (YFE) serves as a coordination point for ADP. Residue Glu-338 participates in Mn(2+) binding. Arg-340 is a binding site for L-glutamate.

It belongs to the glutamine synthetase family. In terms of assembly, homooctamer and homotetramer. It depends on biotin as a cofactor. Mg(2+) is required as a cofactor. The cofactor is Mn(2+). In terms of tissue distribution, expressed in retina, brain and liver. Little or no detectable expression in breast muscle, pancreas and spleen.

The protein localises to the cytoplasm. It localises to the mitochondrion. It carries out the reaction L-glutamate + NH4(+) + ATP = L-glutamine + ADP + phosphate + H(+). The enzyme catalyses L-glutamate + H(+) = 4-aminobutanoate + CO2. Its activity is regulated as follows. Glutamate to glutamine ratio influences catalytic activity. At glutamate to glutamine ratios greater than 4, decarboxylase activity ceases. In the presence of manganese, synthetase activity is limited to concentrations between 10 mM and 20 mM, whereas decarboxylase activity is not affected. Both catalytic activities are inhibited by avidin. Glutamine synthetase that catalyzes the ATP-dependent conversion of glutamate and ammonia to glutamine. When expressed in liver, it may be involved in detoxifying intramitochondrially generated ammonia. Also acts as glutamate decarboxylase by catalyzing the production of 4-aminobutanoate (gamma-aminobutyric acid, GABA) in a pyridoxal phosphate-independent manner. In Gallus gallus (Chicken), this protein is Glutamine synthetase.